We begin with the raw amino-acid sequence, 189 residues long: 5-hmdU DNA kinase (189 aa).

Belongs to the thymidylate kinase family. 5-hmdU DNA kinase subfamily.

It catalyses the reaction 5-hydroxymethyl-dUMP in DNA + ATP = 5-phosphomethyl-dUMP in DNA + ADP + H(+). In terms of biological role, phosphorylates 5-hydroxymethyluracil (5hmdU) into 5-phosphomethyl-2'-deoxyuridine (5- PmdU) on DNA as a step in the pathway leading to thymidine hypermodifications in the viral genome. The phosphate is added internally to the DNA polymer. As a final result of the pathway of hypermodification, 5-AcNmdU substitutes for a subset of thymidines in the viral DNA. These modifications probably prevent degradation of viral genome by the host restriction-modification antiviral defense system. This Pseudomonas phage PaMx11 protein is 5-hmdU DNA kinase.